A 154-amino-acid chain; its full sequence is Fimbrial protein (154 aa).

A propeptide spans 1–6 (MKAQKG) (leader sequence). Phe-7 bears the N-methylphenylalanine mark. Residues 7 to 27 (FTLIELMIVVAIIGILAAIAI) traverse the membrane as a helical segment. Cys-133 and Cys-151 are joined by a disulfide. A glycan (O-linked (FucNAc...) serine) is linked at Ser-154.

This sequence belongs to the N-Me-Phe pilin family. The pili are polar flexible filaments of about 5.4 nanometers diameter and 2.5 micrometers average length; they consist of only a single polypeptide chain arranged in a helical configuration of five subunits per turn in the assembled pilus. Post-translationally, O-glycosylated; glycan consists of 5NbetaOHC47NFmPse(alpha2-4)Xyl(beta1-3)FucNAc in beta1-O linkage to Ser.

It is found in the fimbrium. The protein resides in the membrane. The chain is Fimbrial protein (pilA) from Pseudomonas aeruginosa.